The following is a 346-amino-acid chain: Probable RNA methyltransferase PSPA7_3453 (346 aa).

Residue E91 is the Proton acceptor of the active site. The 227-residue stretch at 94 to 320 (LLPRGGLCVS…TKVRNSAGQD (227 aa)) folds into the Radical SAM core domain. C101 and C325 form a disulfide bridge. [4Fe-4S] cluster is bound by residues C108, C112, and C115. S-adenosyl-L-methionine contacts are provided by residues 153 to 154 (GE), S183, 206 to 208 (SLH), and N282. The active-site S-methylcysteine intermediate is the C325.

Belongs to the radical SAM superfamily. RlmN family. It depends on [4Fe-4S] cluster as a cofactor.

It localises to the cytoplasm. The chain is Probable RNA methyltransferase PSPA7_3453 from Pseudomonas paraeruginosa (strain DSM 24068 / PA7) (Pseudomonas aeruginosa (strain PA7)).